The primary structure comprises 274 residues: 3-methyl-2-oxobutanoate hydroxymethyltransferase (274 aa).

2 residues coordinate Mg(2+): Asp-46 and Asp-85. 3-methyl-2-oxobutanoate is bound by residues 46–47 (DS), Asp-85, and Lys-115. Glu-117 is a binding site for Mg(2+). The active-site Proton acceptor is the Glu-184.

It belongs to the PanB family. In terms of assembly, homodecamer; pentamer of dimers. The cofactor is Mg(2+).

Its subcellular location is the cytoplasm. The catalysed reaction is 3-methyl-2-oxobutanoate + (6R)-5,10-methylene-5,6,7,8-tetrahydrofolate + H2O = 2-dehydropantoate + (6S)-5,6,7,8-tetrahydrofolate. It participates in cofactor biosynthesis; (R)-pantothenate biosynthesis; (R)-pantoate from 3-methyl-2-oxobutanoate: step 1/2. Its function is as follows. Catalyzes the reversible reaction in which hydroxymethyl group from 5,10-methylenetetrahydrofolate is transferred onto alpha-ketoisovalerate to form ketopantoate. The protein is 3-methyl-2-oxobutanoate hydroxymethyltransferase of Thermoanaerobacter pseudethanolicus (strain ATCC 33223 / 39E) (Clostridium thermohydrosulfuricum).